The chain runs to 424 residues: Protein SamB (424 aa).

The UmuC domain maps to 2–189 (FALADVNSFY…QPVEEIWGVG (188 aa)).

The protein belongs to the DNA polymerase type-Y family.

In terms of biological role, involved in UV protection and mutation. This chain is Protein SamB (samB), found in Salmonella typhimurium.